The sequence spans 290 residues: NAD kinase (290 aa).

The Proton acceptor role is filled by D72. NAD(+) contacts are provided by residues 72-73, K77, 145-146, D175, 186-191, and A210; these read DG, NE, and TAYSLS.

Belongs to the NAD kinase family. It depends on a divalent metal cation as a cofactor.

It localises to the cytoplasm. It carries out the reaction NAD(+) + ATP = ADP + NADP(+) + H(+). Involved in the regulation of the intracellular balance of NAD and NADP, and is a key enzyme in the biosynthesis of NADP. Catalyzes specifically the phosphorylation on 2'-hydroxyl of the adenosine moiety of NAD to yield NADP. This is NAD kinase from Bacteroides fragilis (strain ATCC 25285 / DSM 2151 / CCUG 4856 / JCM 11019 / LMG 10263 / NCTC 9343 / Onslow / VPI 2553 / EN-2).